Reading from the N-terminus, the 153-residue chain is Peptide deformylase (153 aa).

C87 and H129 together coordinate Fe cation. Residue E130 is part of the active site. Residue H133 coordinates Fe cation.

This sequence belongs to the polypeptide deformylase family. Fe(2+) serves as cofactor.

It carries out the reaction N-terminal N-formyl-L-methionyl-[peptide] + H2O = N-terminal L-methionyl-[peptide] + formate. Its function is as follows. Removes the formyl group from the N-terminal Met of newly synthesized proteins. Requires at least a dipeptide for an efficient rate of reaction. N-terminal L-methionine is a prerequisite for activity but the enzyme has broad specificity at other positions. The chain is Peptide deformylase from Dictyoglomus thermophilum (strain ATCC 35947 / DSM 3960 / H-6-12).